The sequence spans 477 residues: Oleate hydroxylase FAH12 (477 aa).

The segment at 26–48 is disordered; that stretch reads YESSAAVSPAESPRTSASSTSLS. A compositionally biased stretch (low complexity) spans 27-48; the sequence is ESSAAVSPAESPRTSASSTSLS. The next 2 helical transmembrane spans lie at 101-118 and 133-153; these read AYVL…YLFH and FVLW…LWVI. The short motif at 155 to 159 is the Histidine box-1 element; the sequence is HECGH. Residues 167 to 187 form a helical membrane-spanning segment; it reads FISDLTGWVIHSALLVPYFSW. The Histidine box-2 signature appears at 191 to 195; that stretch reads HSAHH. 3 helical membrane-spanning segments follow: residues 234-254, 299-319, and 327-347; these read PIYT…SYLM, YIVL…YLGN, and AVWY…ITFL.

Belongs to the fatty acid desaturase type 1 family.

The protein resides in the microsome membrane. It carries out the reaction (9Z)-octadecenoate + AH2 + O2 = (12R)-hydroxy-(9Z)-octadecenoate + A + H2O. Its pathway is lipid metabolism; monounsaturated fatty acid biosynthesis. In terms of biological role, oleate hydroxylase involved in the biosynthesis of ricinoleate (12-hydroxy-cis-9-octadecenoate), that is present at high levels in C.purpurea sclerotium tissue. Exhibits delta(12) hydroxylase activity on 16C and 18C monounsaturated fatty acids (i.e. oleic and palmitoleic acids), and, to a lower extent, gamma(3) hydroxylase activity on ricinoleate. The protein is Oleate hydroxylase FAH12 of Claviceps purpurea (Ergot fungus).